The sequence spans 315 residues: Glycine--tRNA ligase alpha subunit (315 aa).

This sequence belongs to the class-II aminoacyl-tRNA synthetase family. In terms of assembly, tetramer of two alpha and two beta subunits.

Its subcellular location is the cytoplasm. The catalysed reaction is tRNA(Gly) + glycine + ATP = glycyl-tRNA(Gly) + AMP + diphosphate. The protein is Glycine--tRNA ligase alpha subunit of Ectopseudomonas mendocina (strain ymp) (Pseudomonas mendocina).